Consider the following 219-residue polypeptide: N-(5'-phosphoribosyl)anthranilate isomerase (219 aa).

The protein belongs to the TrpF family.

It carries out the reaction N-(5-phospho-beta-D-ribosyl)anthranilate = 1-(2-carboxyphenylamino)-1-deoxy-D-ribulose 5-phosphate. Its pathway is amino-acid biosynthesis; L-tryptophan biosynthesis; L-tryptophan from chorismate: step 3/5. In Bradyrhizobium sp. (strain ORS 278), this protein is N-(5'-phosphoribosyl)anthranilate isomerase.